The chain runs to 696 residues: TASGKLQRKFLDRFAISMGRGVALGKTYGTLGAASRGATLLQDLLFTEIIFAFDRERVPERAVHARGTGAHGTFLSYEDWSNLTAASFLSAEGKFTPEMTRFSTVSGARGSADTARDVHGFATRFYVDEGNFDIVGNNIPVFFIWDVIIEPTLMALHAQKPNPRFHLPRGQQDPNRISDNLTARGDSLAQGSQISSERGSPKAYSNTEPNKHRSFRLVTDNGKQFQCSNHWQPLQGFIDLGVEEAWRFPEEGEGYVAENLFESIELLTVGDEELEIQSMSFNNDLRERFNSSEVTKSSVVRLVPLITQGKLVFNKNIQMLFNEVIGAMFQPGHIVRGVDFTEDPLLQGRLFSYLDTQLNRHGPNIQQLGFNRPPRAPIHNNNRDGAGEMIDLPPFASFVETQEWGAKDIKQTAVGQNKFDQEHRFSHWKFGVNGFVHTRNDDNVTHARGFFTAPERGQQKKRVAAFDRMFTVVGLSVDGQQANSDQYADFDAAAGKKVAKAIGVEAPKPNSNYFHPTDVFGEHIAASGTKYGVPEGNTKGVLLASVNKPASIAQGAKLQVVASSGDFAEFFISAKQLNMREVTQGIIPLVPVLKLAKLDLGKTFRFQLMQVGNIEELERFGFDLPDLTDKQVDLSAMGMFETTFRPTSRAAQFEQGKTKLVKGLQGKNAFMDRALKQPSNNREKIQRFADRFAVQD.

Residues histidine 64 and asparagine 137 contribute to the active site. Residues 187–211 are disordered; sequence SLAQGSQISSERGSPKAYSNTEPNK. The segment covering 189 to 208 has biased composition (polar residues); it reads AQGSQISSERGSPKAYSNTE. Tyrosine 353 provides a ligand contact to heme.

This sequence belongs to the catalase family. It depends on heme as a cofactor.

It catalyses the reaction 2 H2O2 = O2 + 2 H2O. Occurs in almost all aerobically respiring organisms and serves to protect cells from the toxic effects of hydrogen peroxide. This chain is Catalase, found in Penicillium janthinellum (Penicillium vitale).